The chain runs to 450 residues: Perilipin-2 (450 aa).

N-acetylalanine is present on Ala-2. Residue Ser-215 is modified to Phosphoserine. Tyr-232 carries the post-translational modification Phosphotyrosine. The tract at residues 411-450 (ESESAQAPGTTRRPGRWSRKHPKPVPVSNAEGSQPDDSSS) is disordered. Over residues 423–433 (RPGRWSRKHPK) the composition is skewed to basic residues. Over residues 440–450 (AEGSQPDDSSS) the composition is skewed to polar residues.

It belongs to the perilipin family. As to quaternary structure, interacts with IRGC. Post-translationally, acylated; primarily with C14, C16 and C18 fatty acids. Phosphorylation at Tyr-232 by isoform 1 of CHKA (CHKalpha2) promotes dissociation from lipid droplets: dissociation is followed by recruitment of autophagosome machinery to lipid droplets and subsequent lipid droplet lipolysis. In terms of processing, polyubiquitination of Nt-acetylatable A-PLIN2 by MARCHF6 lead to degradation by 26S proteasomes. Milk lipid globules.

Its subcellular location is the membrane. The protein resides in the lipid droplet. In terms of biological role, structural component of lipid droplets, which is required for the formation and maintenance of lipid storage droplets. The chain is Perilipin-2 (PLIN2) from Bos taurus (Bovine).